A 1888-amino-acid polypeptide reads, in one-letter code: Zinc finger protein 106 (1888 aa).

A C2H2-type 1; atypical zinc finger spans residues 5–29; sequence RKCILCHIVYGSKKEMDEHMRSMLH. The C2H2-type 2; atypical zinc finger occupies 43–67; it reads HECRVCRVTEVGLSAYAKHISGQLH. Residues 68-187 are disordered; it reads KDNVDAQERE…GPRGSSVWHK (120 aa). Positions 75 to 89 are enriched in acidic residues; that stretch reads EREDDGKEEEEEEYF. Basic and acidic residues-rich tracts occupy residues 90–108, 118–138, and 150–160; these read DKEL…RQDE, SDDR…DRES, and PQRDWKWEKDG. Lys-91 participates in a covalent cross-link: Glycyl lysine isopeptide (Lys-Gly) (interchain with G-Cter in SUMO2). Lys-155 is covalently cross-linked (Glycyl lysine isopeptide (Lys-Gly) (interchain with G-Cter in SUMO2)). Residues 161-175 show a composition bias toward polar residues; that stretch reads FNSTRKNSFPHSLRN. Glycyl lysine isopeptide (Lys-Gly) (interchain with G-Cter in SUMO2) cross-links involve residues Lys-265 and Lys-309. Disordered regions lie at residues 287-326 and 338-362; these read KKSN…DTFP and RESQ…TKAR. Positions 296–311 are enriched in basic and acidic residues; sequence SQERCKWQRQDRDKAA. A compositionally biased stretch (polar residues) spans 342–357; sequence TTKQTDTAASKINGKN. Residues Lys-375, Lys-384, Lys-390, Lys-435, Lys-469, and Lys-479 each participate in a glycyl lysine isopeptide (Lys-Gly) (interchain with G-Cter in SUMO2) cross-link. Disordered regions lie at residues 410–437 and 453–525; these read KPVD…HKAI and TEQS…TSKS. The segment covering 481 to 491 has biased composition (basic residues); the sequence is GPHKQNLKNRS. Positions 507–525 are enriched in polar residues; the sequence is LLNTSTLEGSHGSSYTSKS. Residues Lys-524, Lys-534, and Lys-544 each participate in a glycyl lysine isopeptide (Lys-Gly) (interchain with G-Cter in SUMO2) cross-link. The disordered stretch occupies residues 537-617; sequence KTVSGTQKEP…SAMTSDAENH (81 aa). A compositionally biased stretch (polar residues) spans 551-572; sequence NNTSQKAQDTVLQCPKTLQNPL. A Glycyl lysine isopeptide (Lys-Gly) (interchain with G-Cter in SUMO2) cross-link involves residue Lys-577. Basic and acidic residues predominate over residues 577–593; it reads KRMENDAKESSVEESAK. Polar residues predominate over residues 597–613; sequence SIESQPHSAGNSAMTSD. A Glycyl lysine isopeptide (Lys-Gly) (interchain with G-Cter in SUMO2) cross-link involves residue Lys-620. Positions 635–661 are disordered; it reads STHTVDKEQGSQIPGTPENLSTSPRNS. The segment covering 644–661 has biased composition (polar residues); that stretch reads GSQIPGTPENLSTSPRNS. 2 positions are modified to phosphoserine: Ser-657 and Ser-677. Glycyl lysine isopeptide (Lys-Gly) (interchain with G-Cter in SUMO2) cross-links involve residues Lys-687, Lys-700, Lys-721, Lys-738, Lys-758, Lys-792, and Lys-824. The segment at 696-728 is disordered; sequence NNLVKSDGPFETESFEDTSLDTELQKPDLNNQP. Residues Ser-876, Ser-878, Ser-881, and Ser-909 each carry the phosphoserine modification. The tract at residues 894–920 is disordered; sequence TGEGTGKENEAQQSPSPNTALSAAQSQ. The span at 904–920 shows a compositional bias: polar residues; that stretch reads AQQSPSPNTALSAAQSQ. Lys-921 is covalently cross-linked (Glycyl lysine isopeptide (Lys-Gly) (interchain with G-Cter in SUMO2)). A Phosphoserine modification is found at Ser-953. Positions 968 to 986 are enriched in basic and acidic residues; the sequence is ARDLHSQERSTPLSERHAQ. Disordered regions lie at residues 968-1064, 1281-1461, and 1468-1487; these read ARDL…ERSQ, EQGN…SKKD, and QNPI…TSEL. The span at 992-1008 shows a compositional bias: low complexity; sequence GNSLSSNASSGHAVSSL. Polar residues predominate over residues 1013-1022; it reads TDSSCTSGAE. Thr-1036 carries the phosphothreonine modification. 3 positions are modified to phosphoserine: Ser-1040, Ser-1041, and Ser-1046. Positions 1050-1060 are enriched in basic residues; it reads KNKRRKIKGKK. Over residues 1281–1296 the composition is skewed to polar residues; sequence EQGNSRSKGNSPSCQS. Phosphoserine occurs at positions 1291, 1293, and 1296. Residue Lys-1310 forms a Glycyl lysine isopeptide (Lys-Gly) (interchain with G-Cter in SUMO2) linkage. A compositionally biased stretch (low complexity) spans 1312-1321; the sequence is SSGSEACSSS. Ser-1313 bears the Phosphoserine mark. Lys-1335 participates in a covalent cross-link: Glycyl lysine isopeptide (Lys-Gly) (interchain with G-Cter in SUMO2). Residues 1338-1354 are compositionally biased toward polar residues; that stretch reads QSPADQPEQQAESTLAS. A Phosphoserine modification is found at Ser-1339. Residues 1360–1373 are compositionally biased toward basic residues; sequence SKKKKKLRKKKTLR. The residue at position 1381 (Ser-1381) is a Phosphoserine. Residue Thr-1383 is modified to Phosphothreonine. Glycyl lysine isopeptide (Lys-Gly) (interchain with G-Cter in SUMO2) cross-links involve residues Lys-1391, Lys-1403, Lys-1406, and Lys-1460. Residues 1450-1461 show a composition bias toward basic and acidic residues; the sequence is GDEKPDSPSKKD. The segment covering 1470–1487 has biased composition (polar residues); sequence PIETSRSGCDEVSSTSEL. Ser-1474 is modified (phosphoserine). Residues Lys-1492 and Lys-1509 each participate in a glycyl lysine isopeptide (Lys-Gly) (interchain with G-Cter in SUMO2) cross-link. Positions 1509–1531 are disordered; sequence KASKHSSEISSEPGDDEEPTEGS. 6 WD repeats span residues 1534–1573, 1575–1618, 1659–1700, 1703–1742, 1743–1780, and 1783–1820; these read GHQA…GVFE, HTSK…EQLQ, HGPR…LLRT, GHSK…RIYK, GHNH…RLQV, and GHKD…NYRC. Lys-1590 is covalently cross-linked (Glycyl lysine isopeptide (Lys-Gly) (interchain with G-Cter in SUMO2)). Residue Lys-1742 forms a Glycyl lysine isopeptide (Lys-Gly) (interchain with G-Cter in SUMO2) linkage. The C2H2-type 3; atypical zinc-finger motif lies at 1818-1843; that stretch reads YRCWWYGCTLIFGVVDHLKQHLLTDH. Lys-1869 is covalently cross-linked (Glycyl lysine isopeptide (Lys-Gly) (interchain with G-Cter in SUMO2)).

In terms of assembly, interacts with KNOP1. Interacts with TARDBP and NUP107. Interacts (via N-terminus) with RBM39. Interacts with the SH3 domains of FYN and GRB2. In terms of processing, phosphorylated by FYN in vitro. In terms of tissue distribution, widely expressed, with strongest expression in skeletal muscle, heart and brain (at protein level). Detected in spinal cord motor neurons.

It is found in the nucleus. The protein resides in the nucleolus. The protein localises to the nucleus speckle. In terms of biological role, RNA-binding protein. Specifically binds to 5'-GGGGCC-3' sequence repeats in RNA. Essential for maintenance of peripheral motor neuron and skeletal muscle function. Required for normal expression and/or alternative splicing of a number of genes in spinal cord and skeletal muscle, including the neurite outgrowth inhibitor RTN4. Also contributes to normal mitochondrial respiratory function in motor neurons, via an unknown mechanism. The protein is Zinc finger protein 106 (Znf106) of Mus musculus (Mouse).